The primary structure comprises 447 residues: UDP-N-acetylmuramate--L-alanine ligase (447 aa).

108–114 (GSHGKTS) provides a ligand contact to ATP.

This sequence belongs to the MurCDEF family.

The protein resides in the cytoplasm. The catalysed reaction is UDP-N-acetyl-alpha-D-muramate + L-alanine + ATP = UDP-N-acetyl-alpha-D-muramoyl-L-alanine + ADP + phosphate + H(+). Its pathway is cell wall biogenesis; peptidoglycan biosynthesis. In terms of biological role, cell wall formation. The sequence is that of UDP-N-acetylmuramate--L-alanine ligase from Listeria welshimeri serovar 6b (strain ATCC 35897 / DSM 20650 / CCUG 15529 / CIP 8149 / NCTC 11857 / SLCC 5334 / V8).